The following is a 455-amino-acid chain: N(6)-adenosine-methyltransferase non-catalytic subunit METTL14 (455 aa).

The disordered stretch occupies residues 21-96; the sequence is QQLGAESPDS…QHQEESGPYE (76 aa). Residues 37 to 51 show a composition bias toward basic and acidic residues; it reads SKDEQKEIEETRETC. A compositionally biased stretch (acidic residues) spans 69 to 82; it reads EGEDPEEDVEEQKE. Interaction with METTL3 stretches follow at residues 134-135 and 236-237; these read RD and SG. The segment at 244–253 is positively charged region required for RNA-binding; sequence RMCLRKWGFR. Interaction with METTL3 stretches follow at residues 254–257 and 277–286; these read RCED and KAVFQRTKEH. The positively charged region required for RNA-binding stretch occupies residues 296–297; the sequence is RR. The interval 307 to 311 is interaction with METTL3; the sequence is NVDID. The interval 392 to 455 is disordered; sequence ERLRPKSPPP…GGPHRGFPPR (64 aa). Gly residues predominate over residues 407–421; it reads RGGGAPRGGRGGPAA. Over residues 423–441 the composition is skewed to basic and acidic residues; it reads RGDRGRERNRPNFRGDRGG.

This sequence belongs to the MT-A70-like family. In terms of assembly, heterodimer; heterodimerizes with mettl3 to form an antiparallel heterodimer that constitutes an active methyltransferase. Component of the WMM complex, a N6-methyltransferase complex composed of a catalytic subcomplex, named MAC, and of an associated subcomplex, named MACOM. The MAC subcomplex is composed of mettl3 and mettl14.

Its subcellular location is the nucleus. Functionally, the METTL3-METTL14 heterodimer forms a N6-methyltransferase complex that methylates adenosine residues at the N(6) position of some mRNAs and regulates the circadian clock, differentiation of embryonic stem cells and cortical neurogenesis. In the heterodimer formed with mettl3, mettl14 constitutes the RNA-binding scaffold that recognizes the substrate rather than the catalytic core. N6-methyladenosine (m6A), which takes place at the 5'-[AG]GAC-3' consensus sites of some mRNAs, plays a role in mRNA stability and processing. The sequence is that of N(6)-adenosine-methyltransferase non-catalytic subunit METTL14 (mettl14) from Danio rerio (Zebrafish).